Here is a 654-residue protein sequence, read N- to C-terminus: NADPH-dependent diflavin oxidoreductase 1 (654 aa).

The 153-residue stretch at 14–166 (ALVLYGSETG…TFIPWITDFR (153 aa)) folds into the Flavodoxin-like domain. Residues 20–25 (SETGNA), 75–78 (STTG), and 113–122 (LGDSSYPKFN) contribute to the FMN site. The FAD-binding FR-type domain maps to 235 to 485 (PDALTATLVE…QLQRGGLSSS (251 aa)). Residues R389, 419 to 422 (RQFS), and 458 to 461 (GVCT) contribute to the FAD site. NADP(+)-binding positions include T500, 568-569 (SR), and 574-578 (KIYVQ). W654 serves as a coordination point for FAD.

This sequence belongs to the NADPH-dependent diflavin oxidoreductase NDOR1 family. It in the N-terminal section; belongs to the flavodoxin family. The protein in the C-terminal section; belongs to the flavoprotein pyridine nucleotide cytochrome reductase family. As to quaternary structure, interacts with dre2; as part of the cytosolic iron-sulfur (Fe-S) protein assembly (CIA) machinery. Requires FAD as cofactor. The cofactor is FMN.

The protein resides in the cytoplasm. Its subcellular location is the mitochondrion. The enzyme catalyses 2 oxidized [2Fe-2S]-[protein] + NADPH = 2 reduced [2Fe-2S]-[protein] + NADP(+) + H(+). Its function is as follows. NADPH-dependent reductase which is a central component of the cytosolic iron-sulfur (Fe-S) protein assembly (CIA) machinery. Transfers electrons from NADPH via its FAD and FMN prosthetic groups to the [2Fe-2S] cluster of dre2, another key component of the CIA machinery. In turn, this reduced cluster provides electrons for assembly of cytosolic iron-sulfur cluster proteins. Positively controls H(2)O(2)-induced cell death. In Aspergillus fumigatus (strain ATCC MYA-4609 / CBS 101355 / FGSC A1100 / Af293) (Neosartorya fumigata), this protein is NADPH-dependent diflavin oxidoreductase 1.